Reading from the N-terminus, the 307-residue chain is Nicotinamide/nicotinic acid mononucleotide adenylyltransferase 2 (307 aa).

Residues Ser-16 and Phe-17 each coordinate NAD(+). Residue His-24 coordinates ATP. Trp-92 and Thr-95 together coordinate NAD(+). S-palmitoyl cysteine attachment occurs at residues Cys-164 and Cys-165. Gly-200, Asp-202, Leu-212, Trp-213, and Arg-232 together coordinate NAD(+). Residue 271–274 (TKSR) coordinates ATP.

It belongs to the eukaryotic NMN adenylyltransferase family. Monomer. It depends on Mg(2+) as a cofactor. Post-translationally, degraded in response to injured neurite. Degradation is caused by polyubiquitination by MYCBP2 after recognition by FBXO45. In terms of processing, palmitoylated; palmitoylation is required for membrane association.

It is found in the golgi apparatus membrane. It localises to the cytoplasmic vesicle membrane. The protein resides in the cytoplasm. Its subcellular location is the cell projection. The protein localises to the axon. The catalysed reaction is beta-nicotinamide D-ribonucleotide + ATP + H(+) = diphosphate + NAD(+). The enzyme catalyses nicotinate beta-D-ribonucleotide + ATP + H(+) = deamido-NAD(+) + diphosphate. It participates in cofactor biosynthesis; NAD(+) biosynthesis; NAD(+) from nicotinamide D-ribonucleotide: step 1/1. Its pathway is cofactor biosynthesis; NAD(+) biosynthesis; deamido-NAD(+) from nicotinate D-ribonucleotide: step 1/1. Inhibited by P1-(adenosine-5')-P3-(nicotinamide-riboside-5')-triphosphate (Np3AD) and P1-(adenosine-5')-P4-(nicotinamide-riboside-5')-tetraphosphate (Np4AD). Its function is as follows. Nicotinamide/nicotinate-nucleotide adenylyltransferase that acts as an axon maintenance factor. Axon survival factor required for the maintenance of healthy axons: acts by delaying Wallerian axon degeneration, an evolutionarily conserved process that drives the loss of damaged axons. Catalyzes the formation of NAD(+) from nicotinamide mononucleotide (NMN) and ATP. Can also use the deamidated form; nicotinic acid mononucleotide (NaMN) as substrate but with a lower efficiency. Cannot use triazofurin monophosphate (TrMP) as substrate. Also catalyzes the reverse reaction, i.e. the pyrophosphorolytic cleavage of NAD(+). For the pyrophosphorolytic activity prefers NAD(+), NADH and NaAD as substrates and degrades nicotinic acid adenine dinucleotide phosphate (NHD) less effectively. Fails to cleave phosphorylated dinucleotides NADP(+), NADPH and NaADP(+). Also acts as an activator of ADP-ribosylation by supporting the catalytic activity of PARP16 and promoting mono-ADP-ribosylation of ribosomes by PARP16. May be involved in the maintenance of axonal integrity. This is Nicotinamide/nicotinic acid mononucleotide adenylyltransferase 2 (Nmnat2) from Rattus norvegicus (Rat).